The following is a 517-amino-acid chain: Crotonobetaine/carnitine--CoA ligase (517 aa).

It belongs to the ATP-dependent AMP-binding enzyme family.

The catalysed reaction is 4-(trimethylamino)butanoate + ATP + CoA = 4-(trimethylamino)butanoyl-CoA + AMP + diphosphate. It catalyses the reaction crotonobetaine + ATP + CoA = crotonobetainyl-CoA + AMP + diphosphate. The enzyme catalyses (R)-carnitine + ATP + CoA = (R)-carnitinyl-CoA + AMP + diphosphate. It participates in amine and polyamine metabolism; carnitine metabolism. Its function is as follows. Catalyzes the transfer of CoA to carnitine, generating the initial carnitinyl-CoA needed for the CaiB reaction cycle. Also has activity toward crotonobetaine and gamma-butyrobetaine. In Salmonella choleraesuis (strain SC-B67), this protein is Crotonobetaine/carnitine--CoA ligase.